The following is a 209-amino-acid chain: Thiamine-phosphate synthase (209 aa).

Residues 32-36 (QLRMK) and aspartate 64 contribute to the 4-amino-2-methyl-5-(diphosphooxymethyl)pyrimidine site. Residues aspartate 65 and aspartate 84 each coordinate Mg(2+). Threonine 103 is a binding site for 4-amino-2-methyl-5-(diphosphooxymethyl)pyrimidine. 129–131 (TTT) provides a ligand contact to 2-[(2R,5Z)-2-carboxy-4-methylthiazol-5(2H)-ylidene]ethyl phosphate. 4-amino-2-methyl-5-(diphosphooxymethyl)pyrimidine is bound at residue lysine 132. A 2-[(2R,5Z)-2-carboxy-4-methylthiazol-5(2H)-ylidene]ethyl phosphate-binding site is contributed by glycine 165.

The protein belongs to the thiamine-phosphate synthase family. Requires Mg(2+) as cofactor.

The enzyme catalyses 2-[(2R,5Z)-2-carboxy-4-methylthiazol-5(2H)-ylidene]ethyl phosphate + 4-amino-2-methyl-5-(diphosphooxymethyl)pyrimidine + 2 H(+) = thiamine phosphate + CO2 + diphosphate. It catalyses the reaction 2-(2-carboxy-4-methylthiazol-5-yl)ethyl phosphate + 4-amino-2-methyl-5-(diphosphooxymethyl)pyrimidine + 2 H(+) = thiamine phosphate + CO2 + diphosphate. It carries out the reaction 4-methyl-5-(2-phosphooxyethyl)-thiazole + 4-amino-2-methyl-5-(diphosphooxymethyl)pyrimidine + H(+) = thiamine phosphate + diphosphate. Its pathway is cofactor biosynthesis; thiamine diphosphate biosynthesis; thiamine phosphate from 4-amino-2-methyl-5-diphosphomethylpyrimidine and 4-methyl-5-(2-phosphoethyl)-thiazole: step 1/1. Its function is as follows. Condenses 4-methyl-5-(beta-hydroxyethyl)thiazole monophosphate (THZ-P) and 2-methyl-4-amino-5-hydroxymethyl pyrimidine pyrophosphate (HMP-PP) to form thiamine monophosphate (TMP). This chain is Thiamine-phosphate synthase, found in Bacteroides thetaiotaomicron (strain ATCC 29148 / DSM 2079 / JCM 5827 / CCUG 10774 / NCTC 10582 / VPI-5482 / E50).